A 110-amino-acid chain; its full sequence is Movement protein TGB2 (110 aa).

The Cytoplasmic portion of the chain corresponds to 1–10; the sequence is MSGAHHLTPP. A helical membrane pass occupies residues 11 to 34; it reads TDYGKPVLAASIGISLALLVYTAT. Residues 35–76 lie on the Lumenal side of the membrane; sequence RSTLPHVGDNLHALPHGGRYVDGTKSISYFSPSASKTRDPFP. A helical membrane pass occupies residues 77–92; the sequence is FAFLLILTLSGLILLL. Residues 93–110 lie on the Cytoplasmic side of the membrane; that stretch reads SRRRSNPHSCPSCGTPHA.

The protein belongs to the Tymovirales TGBp2 protein family.

It localises to the host endoplasmic reticulum membrane. Functionally, plays a role in viral cell-to-cell propagation, by facilitating genome transport to neighboring plant cells through plasmosdesmata,. The sequence is that of Movement protein TGB2 from Plantago asiatica (P1AMV).